The sequence spans 221 residues: Glutathione S-transferase (221 aa).

Methionine 1 carries the post-translational modification N-acetylmethionine. At alanine 2 the chain carries N-acetylalanine; in Glutathione S-transferase, N-terminally processed. Positions glycine 3–glycine 82 constitute a GST N-terminal domain. Residues tyrosine 9, lysine 45, glutamine 53 to valine 54, and glutamine 66 to threonine 67 contribute to the glutathione site. Positions aspartate 84–aspartate 208 constitute a GST C-terminal domain.

Belongs to the GST superfamily. Alpha family. As to quaternary structure, homodimer or heterodimer of GSTA1 and GSTA2.

It localises to the cytoplasm. It carries out the reaction RX + glutathione = an S-substituted glutathione + a halide anion + H(+). The enzyme catalyses prostaglandin A2 + glutathione = prostaglandin A2-S-(R)-glutathione. It catalyses the reaction prostaglandin J2 + glutathione = prostaglandin J2-S-(R)-glutathione. The catalysed reaction is (13S)-hydroperoxy-(9Z,11E)-octadecadienoate + 2 glutathione = (13S)-hydroxy-(9Z,11E)-octadecadienoate + glutathione disulfide + H2O. It carries out the reaction androst-5-ene-3,17-dione = androst-4-ene-3,17-dione. Glutathione S-transferase that catalyzes the nucleophilic attack of the sulfur atom of glutathione on the electrophilic groups of a wide range of exogenous and endogenous compounds. Involved in the formation of glutathione conjugates of both prostaglandin A2 (PGA2) and prostaglandin J2 (PGJ2). It also catalyzes the isomerization of D5-androstene-3,17-dione (AD) into D4-androstene-3,17-dione and may therefore play an important role in hormone biosynthesis. Through its glutathione-dependent peroxidase activity toward the fatty acid hydroperoxide (13S)-hydroperoxy-(9Z,11E)-octadecadienoate/13-HPODE it is also involved in the metabolism of oxidized linoleic acid. The polypeptide is Glutathione S-transferase (Antechinus stuartii (Brown marsupial mouse)).